The sequence spans 929 residues: von Willebrand factor C and EGF domain-containing protein (929 aa).

The first 21 residues, 1–21 (MWARLLLHVAYILIPLLGSSA), serve as a signal peptide directing secretion. The EGF-like 1 domain occupies 70 to 98 (LCSFGCGSGICIAPNVCSCQDGEQGATCP). In terms of domain architecture, EGF-like 2; calcium-binding spans 142–180 (DIDECLSSSCEGHCVNTEGGFVCECGPGMQLSADRHSCQ). Disulfide bonds link Cys146/Cys155, Cys151/Cys164, Cys166/Cys179, Cys185/Cys194, Cys190/Cys203, Cys205/Cys218, Cys224/Cys237, Cys233/Cys246, and Cys248/Cys261. The EGF-like 3; calcium-binding domain maps to 181-219 (DTDECLGTPCQQRCKNSIGSYKCSCRAGFHLHGNRHSCI). The 43-residue stretch at 220-262 (DVNECRRPQERRVCHHTCHNTVGSFLCTCRPGFRLRSDRVSCE) folds into the EGF-like 4; calcium-binding domain. Disordered stretches follow at residues 291 to 317 (AGRP…RTIS) and 339 to 374 (PSSS…LGAG). The segment covering 339–353 (PSSSPLGTLGPPSLL) has biased composition (low complexity). 6 VWFC domains span residues 376-433 (SSCW…PSCT), 433-494 (TGCF…GRCY), 491-552 (GRCY…FTCR), 558-618 (TGCS…PDCS), 619-677 (AGCT…PVCH), and 677-762 (HDCN…VNCS). Asn454 and Asn464 each carry an N-linked (GlcNAc...) asparagine glycan. A disordered region spans residues 731–774 (PLEEKQQPSPHGELAKAARNARGDTEVPVNCSSCPGPPSASPTR). The segment covering 743–755 (ELAKAARNARGDT) has biased composition (basic and acidic residues). An N-linked (GlcNAc...) asparagine glycan is attached at Asn787. A compositionally biased stretch (polar residues) spans 791 to 807 (IQSASPSPPIAQTSSSP). Disordered regions lie at residues 791–861 (IQSA…SSTF) and 879–929 (AETP…NSTI). Positions 889-903 (LSETLTTSSSSQRLS) are enriched in low complexity.

The protein resides in the secreted. Functionally, may be a regulatory element in the beta-catenin signaling pathway and a target for chemoprevention of hapatocellular carcinoma. In Mus musculus (Mouse), this protein is von Willebrand factor C and EGF domain-containing protein (Vwce).